Reading from the N-terminus, the 910-residue chain is Staphylococcal nuclease domain-containing protein 1 (910 aa).

An N-acetylalanine modification is found at A2. 3 TNase-like domains span residues 18–166 (TVQR…MWSE), 193–328 (KPVN…IWRD), and 341–496 (KQFV…LHSK). T103 bears the Phosphothreonine mark. N6-acetyllysine is present on K193. T235 and T240 each carry phosphothreonine. 2 short sequence motifs (nuclear localization signal) span residues 321–325 (RRLRI) and 388–392 (KKLRP). S426 is modified (phosphoserine). Residue K513 forms a Glycyl lysine isopeptide (Lys-Gly) (interchain with G-Cter in SUMO2) linkage. Residues 525 to 660 (GRSEAVVEYV…KQRKEKVWAH (136 aa)) form the TNase-like 4 domain. An N6-acetyllysine modification is found at K641. Phosphoserine is present on S645. Residues 729 to 787 (APRRGEFCIAKFVDGEWYRARVEKVESPAKVHVFYIDYGNREILPSTRLGTLPPAFSTR) form the Tudor domain. T779 carries the phosphothreonine modification. Phosphoserine is present on residues S785 and S909.

In terms of assembly, forms a ternary complex with STAT6 and POLR2A. Associates with the RNA-induced silencing complex (RISC). Interacts with the RISC components AGO2, FMR1 and TNRC6A. Interacts with GTF2E1 and GTF2E2. Interacts with PIM1. Interacts with STAT5. Interacts with SYT11 (via C2 2 domain); the interaction with SYT11 is direct. Post-translationally, phosphorylated by PIM1 in vitro.

The protein resides in the cytoplasm. It is found in the nucleus. Its subcellular location is the melanosome. It carries out the reaction Endonucleolytic cleavage to nucleoside 3'-phosphates and 3'-phosphooligonucleotide end-products.. In terms of biological role, endonuclease that mediates miRNA decay of both protein-free and AGO2-loaded miRNAs. As part of its function in miRNA decay, regulates mRNAs involved in G1-to-S phase transition. Functions as a bridging factor between STAT6 and the basal transcription factor. Plays a role in PIM1 regulation of MYB activity. Functions as a transcriptional coactivator for STAT5. The polypeptide is Staphylococcal nuclease domain-containing protein 1 (Snd1) (Mus musculus (Mouse)).